Here is a 302-residue protein sequence, read N- to C-terminus: Putative beta-glucosidase 17 (302 aa).

Positions 1 to 27 (MMAVAAATRIAVVVVAALAALAPGARG) are cleaved as a signal peptide. Residues Q47, H149, and 194-195 (NE) contribute to the a beta-D-glucoside site. The Proton donor role is filled by E195. Residues C214 and C221 are joined by a disulfide bond. N274 carries N-linked (GlcNAc...) asparagine glycosylation.

This sequence belongs to the glycosyl hydrolase 1 family.

The enzyme catalyses Hydrolysis of terminal, non-reducing beta-D-glucosyl residues with release of beta-D-glucose.. This Oryza sativa subsp. japonica (Rice) protein is Putative beta-glucosidase 17 (BGLU17).